We begin with the raw amino-acid sequence, 778 residues long: Aconitate hydratase, mitochondrial (778 aa).

A mitochondrion-targeting transit peptide spans 1–16 (MLSARSAIKRPIVRGL). Substrate contacts are provided by residues Q95 and 188-190 (DSH). C382 serves as a coordination point for [4Fe-4S] cluster. Residue S391 is modified to Phosphoserine. T409 bears the Phosphothreonine mark. Positions 445 and 448 each coordinate [4Fe-4S] cluster. Substrate contacts are provided by R471 and R476. Phosphoserine is present on S556. Residues R604 and 667–668 (SR) contribute to the substrate site.

It belongs to the aconitase/IPM isomerase family. Monomer. Binds to mitochondrial DNA (mtDNA) and identified as component of mitochondrial nucleoids. Requires [4Fe-4S] cluster as cofactor.

The protein localises to the mitochondrion. It is found in the cytoplasm. It carries out the reaction citrate = D-threo-isocitrate. It participates in carbohydrate metabolism; tricarboxylic acid cycle; isocitrate from oxaloacetate: step 2/2. With respect to regulation, subject to catabolite regulation. In terms of biological role, catalyzes the isomerization of citrate to isocitrate via cis-aconitate, a step in the citric acid cycle. Can also provide minor contributions to the reversible dehydration of (R)-homocitrate to cis-homoaconitate, a step in the alpha-aminoadipate pathway for lysine biosynthesis. Also plays an essential role in mtDNA maintenance. May directly protect mtDNA from accumulation of point mutations and ssDNA breaks as a component of mitochondrial nucleoids, or by preventing accumulation of iron citrate thereby alleviating its detrimental effects in mitochondria. The sequence is that of Aconitate hydratase, mitochondrial from Saccharomyces cerevisiae (strain ATCC 204508 / S288c) (Baker's yeast).